The sequence spans 367 residues: Probable cinnamyl alcohol dehydrogenase (367 aa).

Cys-47 serves as a coordination point for Zn(2+). Thr-49 provides a ligand contact to NADP(+). Positions 69, 70, 100, 103, 106, 114, and 163 each coordinate Zn(2+). NADP(+) contacts are provided by residues Thr-167, 188 to 193 (GLGGVG), 211 to 216 (SSSSKK), Thr-251, Gly-275, and 298 to 300 (SFI).

This sequence belongs to the zinc-containing alcohol dehydrogenase family. As to quaternary structure, homodimer. The cofactor is Zn(2+).

The enzyme catalyses (E)-cinnamyl alcohol + NADP(+) = (E)-cinnamaldehyde + NADPH + H(+). It catalyses the reaction (E)-coniferol + NADP(+) = (E)-coniferaldehyde + NADPH + H(+). It carries out the reaction (E)-sinapyl alcohol + NADP(+) = (E)-sinapaldehyde + NADPH + H(+). The catalysed reaction is (E)-4-coumaroyl alcohol + NADP(+) = (E)-4-coumaraldehyde + NADPH + H(+). The enzyme catalyses (E)-caffeyl alcohol + NADP(+) = (E)-caffeyl aldehyde + NADPH + H(+). It functions in the pathway aromatic compound metabolism; phenylpropanoid biosynthesis. Involved in lignin biosynthesis. May catalyze the final step specific for the production of lignin monomers, like coniferyl alcohol, sinapyl alcohol and 4-coumaryl alcohol. The chain is Probable cinnamyl alcohol dehydrogenase from Zea mays (Maize).